The chain runs to 341 residues: Solute carrier family 25 member 43 (341 aa).

3 Solcar repeats span residues Thr11–Leu101, Ser105–Tyr185, and Ser200–Asn298. 6 consecutive transmembrane segments (helical) span residues Leu16 to Ala36, Leu68 to Ala88, Ile110 to Ile130, Gly166 to Met186, Phe205 to Val225, and Val262 to Val282.

This sequence belongs to the mitochondrial carrier (TC 2.A.29) family.

The protein resides in the mitochondrion inner membrane. This chain is Solute carrier family 25 member 43 (Slc25a43), found in Mus musculus (Mouse).